We begin with the raw amino-acid sequence, 529 residues long: Potassium voltage-gated channel subfamily A member 6 (529 aa).

A disordered region spans residues 1–35; the sequence is MRSEKSLTLAAPGEVRGPEGEQQDAGEFQEAEGGG. Residues 1 to 171 lie on the Cytoplasmic side of the membrane; the sequence is MRSEKSLTLA…LLFEYPESSG (171 aa). S3 carries the phosphoserine modification. A compositionally biased stretch (acidic residues) spans 21-30; the sequence is EQQDAGEFQE. A helical transmembrane segment spans residues 172 to 193; that stretch reads PARGIAIVSVLVILISIVIFCL. At 194-262 the chain is on the extracellular side; it reads ETLPQFRADG…TLGGSFFTDP (69 aa). The interval 203–238 is disordered; it reads GRGGSNEGSGTRLSPASRSHEEEDEDEDSYAFPGSI. A compositionally biased stretch (polar residues) spans 210–219; the sequence is GSGTRLSPAS. The chain crosses the membrane as a helical span at residues 263 to 284; it reads FFLVETLCIVWFTFELLVRFSA. C285 carries S-palmitoyl cysteine lipidation. Topologically, residues 285–295 are cytoplasmic; sequence CPSKAAFFRNI. Residues 296 to 316 form a helical membrane-spanning segment; it reads MNIIDLVAIFPYFITLGTELV. Over 317–337 the chain is Extracellular; the sequence is QRHEQQSVSGGSGQNGQQAMS. The chain crosses the membrane as a helical; Voltage-sensor span at residues 338–358; it reads LAILRVIRLVRVFRIFKLSRH. Topologically, residues 359–373 are cytoplasmic; that stretch reads SKGLQILGKTLQASM. An S4-S5 linker region spans residues 360–373; that stretch reads KGLQILGKTLQASM. The chain crosses the membrane as a helical span at residues 374–395; sequence RELGLLIFFLFIGVILFSSAVY. The Extracellular segment spans residues 396–409; sequence FAEADDVDSLFPSI. Positions 410-421 form an intramembrane region, helical; the sequence is PDAFWWAVVTMT. Positions 422 to 427 match the Selectivity filter motif; that stretch reads TVGYGD. Residues 422–429 lie within the membrane without spanning it; sequence TVGYGDMY. Topologically, residues 430–436 are extracellular; sequence PMTVGGK. A helical transmembrane segment spans residues 437 to 465; it reads IVGSLCAIAGVLTIALPVPVIVSNFNYFY. The Cytoplasmic segment spans residues 466-529; the sequence is HRETEQEEQG…YAEKRMLTEV (64 aa). The tract at residues 488–513 is disordered; the sequence is DLKATDNGLGKPDFAEASRERRPSYL. Residues 500–510 show a composition bias toward basic and acidic residues; the sequence is DFAEASRERRP. Residue S511 is modified to Phosphoserine; by PKA. A PDZ-binding motif is present at residues 527–529; it reads TEV.

The protein belongs to the potassium channel family. A (Shaker) (TC 1.A.1.2) subfamily. Kv1.6/KCNA6 sub-subfamily. As to quaternary structure, homotetramer and heterotetramer of potassium channel proteins. Interacts with KCNAB1 and KCNAB2.

It is found in the cell membrane. It carries out the reaction K(+)(in) = K(+)(out). Functionally, voltage-gated potassium channel that mediates transmembrane potassium transport in excitable membranes. Forms tetrameric potassium-selective channels through which potassium ions pass in accordance with their electrochemical gradient. The channel alternates between opened and closed conformations in response to the voltage difference across the membrane. Can form functional homotetrameric channels and heterotetrameric channels that contain variable proportions of KCNA1, KCNA2, KCNA4, KCNA6, and possibly other family members as well; channel properties depend on the type of alpha subunits that are part of the channel. Channel properties are modulated by cytoplasmic beta subunits that regulate the subcellular location of the alpha subunits and promote rapid inactivation. Homotetrameric channels display rapid activation and slow inactivation. This is Potassium voltage-gated channel subfamily A member 6 (Kcna6) from Mus musculus (Mouse).